The primary structure comprises 208 residues: 23 kDa protein (208 aa).

The polypeptide is 23 kDa protein (Pea early browning virus).